The sequence spans 262 residues: Ribosomal RNA small subunit methyltransferase A (262 aa).

6 residues coordinate S-adenosyl-L-methionine: Asn-20, Leu-22, Gly-47, Glu-68, Asp-90, and Asn-110.

The protein belongs to the class I-like SAM-binding methyltransferase superfamily. rRNA adenine N(6)-methyltransferase family. RsmA subfamily.

Its subcellular location is the cytoplasm. It catalyses the reaction adenosine(1518)/adenosine(1519) in 16S rRNA + 4 S-adenosyl-L-methionine = N(6)-dimethyladenosine(1518)/N(6)-dimethyladenosine(1519) in 16S rRNA + 4 S-adenosyl-L-homocysteine + 4 H(+). Its function is as follows. Specifically dimethylates two adjacent adenosines (A1518 and A1519) in the loop of a conserved hairpin near the 3'-end of 16S rRNA in the 30S particle. May play a critical role in biogenesis of 30S subunits. This Chlorobium phaeobacteroides (strain BS1) protein is Ribosomal RNA small subunit methyltransferase A.